The primary structure comprises 345 residues: Phosphate acyltransferase (345 aa).

It belongs to the PlsX family. Homodimer. Probably interacts with PlsY.

It localises to the cytoplasm. The enzyme catalyses a fatty acyl-[ACP] + phosphate = an acyl phosphate + holo-[ACP]. Its pathway is lipid metabolism; phospholipid metabolism. Catalyzes the reversible formation of acyl-phosphate (acyl-PO(4)) from acyl-[acyl-carrier-protein] (acyl-ACP). This enzyme utilizes acyl-ACP as fatty acyl donor, but not acyl-CoA. In Wolbachia sp. subsp. Brugia malayi (strain TRS), this protein is Phosphate acyltransferase.